The primary structure comprises 62 residues: Conotoxin TeAr151 (62 aa).

The N-terminal stretch at 1 to 22 is a signal peptide; the sequence is MRCLPVFVVLLLLIASAPSVDA. Residues 23–47 constitute a propeptide that is removed on maturation; the sequence is QPKTKDDVPLAPLHDNIQNTLQTLR. Methionine 55 carries the methionine sulfoxide; partial modification. Position 60 is a serine amide (serine 60).

This sequence belongs to the conotoxin T superfamily. Post-translationally, contains 2 disulfide bonds. Contains 2 disulfide bonds that can be either 'C1-C3, C2-C4' or 'C1-C4, C2-C3', since these disulfide connectivities have been observed for conotoxins with cysteine framework V (for examples, see AC P0DQQ7 and AC P81755).. Expressed by the venom duct. Is mostly present in part 5 of the venom duct (distal part near the pharynx), and less abundantly present in part 4 of the venom duct.

The protein resides in the secreted. This is Conotoxin TeAr151 from Conus textile (Cloth-of-gold cone).